A 434-amino-acid polypeptide reads, in one-letter code: ATP-dependent RNA helicase RhlB (434 aa).

A Q motif motif is present at residues Lys9–Ala37. The 180-residue stretch at Leu40 to Val219 folds into the Helicase ATP-binding domain. Ala53–Thr60 lines the ATP pocket. Residues Asp165–Asp168 carry the DEAD box motif. Residues Lys243–Leu390 form the Helicase C-terminal domain. Residues Leu390–Pro434 are disordered.

This sequence belongs to the DEAD box helicase family. RhlB subfamily. Component of the RNA degradosome, which is a multiprotein complex involved in RNA processing and mRNA degradation.

Its subcellular location is the cytoplasm. It carries out the reaction ATP + H2O = ADP + phosphate + H(+). Its function is as follows. DEAD-box RNA helicase involved in RNA degradation. Has RNA-dependent ATPase activity and unwinds double-stranded RNA. In Shewanella frigidimarina (strain NCIMB 400), this protein is ATP-dependent RNA helicase RhlB.